Reading from the N-terminus, the 126-residue chain is Major sperm protein 1 (126 aa).

N-acetylalanine is present on A2. The region spanning 8-125 is the MSP domain; the sequence is DIATMPAQKV…RRKNLPIEYN (118 aa).

In terms of tissue distribution, sperm.

It localises to the cell projection. The protein resides in the pseudopodium. The protein localises to the cytoplasm. It is found in the cytoskeleton. Its function is as follows. Central component in molecular interactions underlying sperm crawling. Forms an extensive filament system that extends from sperm villipoda, along the leading edge of the pseudopod. This chain is Major sperm protein 1 (MSP-1), found in Globodera rostochiensis (Golden nematode worm).